Here is a 277-residue protein sequence, read N- to C-terminus: Hydroxyethylthiazole kinase (277 aa).

M56 lines the substrate pocket. The ATP site is built by R131 and T177. A substrate-binding site is contributed by A204.

The protein belongs to the Thz kinase family. The cofactor is Mg(2+).

It catalyses the reaction 5-(2-hydroxyethyl)-4-methylthiazole + ATP = 4-methyl-5-(2-phosphooxyethyl)-thiazole + ADP + H(+). It functions in the pathway cofactor biosynthesis; thiamine diphosphate biosynthesis; 4-methyl-5-(2-phosphoethyl)-thiazole from 5-(2-hydroxyethyl)-4-methylthiazole: step 1/1. In terms of biological role, catalyzes the phosphorylation of the hydroxyl group of 4-methyl-5-beta-hydroxyethylthiazole (THZ). The polypeptide is Hydroxyethylthiazole kinase (Gemmatimonas aurantiaca (strain DSM 14586 / JCM 11422 / NBRC 100505 / T-27)).